The primary structure comprises 170 residues: MRLWPAIAISLPRVTPPEGCEIDGSWVPGGTKVGVSQWSAYRSERNFARADQFLPERWLPEGEEESFINDTRAAFQPFSTGPRNCLGMNFARAETRIIFARLLLDFDLELLTGRDEWEAQKVYIIWDRCPLYVRGFGRQTRHKRPANLWLPWDTHGSSASNERKLADLLS.

Residue Cys85 participates in heme binding.

The protein belongs to the cytochrome P450 family. It depends on heme as a cofactor.

It participates in secondary metabolite biosynthesis. Cytochrome P450 monooxygenase; part of the gene cluster that mediates the biosynthesis of oryzines, natural products with an unusual maleidride backbone. The two subunits of the fungal fatty acid synthase oryfasA and oryfasB probably form octenoic acid. This fatty acid is most likely activated by the acyl-CoA ligase oryP to give octenyl-CoA before the citrate synthase-like protein oryE catalyzes condensation with oxaloacetate to form tricarboxylic acid. The next steps of the pathways are conjectural, but a favorite possible route has been proposed, beginning with decarboxylation and concomitant dehydration by the decarboxylase oryM, followed by tautomerization, which may lead to the production of a diene intermediate. Reduction of this diene intermediate could give the known metabolite piliformic acid. On the pathway to oryzine B and oryzine A, however, hydroxylation of the diene by the alpha-ketoglutarate-dependent dioxygenase oryG and lactonisation by the lactonohydrolases oryH or oryL could give oryzine B directly. Finally, enoyl reduction by the dehydrogenase oryD would then convert oryzine B into oryzine A. The protein is Cytochrome P450 monooxygenase oryQ of Aspergillus oryzae (strain ATCC 42149 / RIB 40) (Yellow koji mold).